Reading from the N-terminus, the 1320-residue chain is Protein brunelleschi (1320 aa).

Residues 313-411 (HRNSSLQEAG…IPGHQRNGDL (99 aa)) are disordered. The segment covering 314–327 (RNSSLQEAGTSPLK) has biased composition (polar residues). Serine 317 carries the post-translational modification Phosphoserine. Threonine 329 carries the phosphothreonine modification. The span at 329–340 (TPEKWRASDATK) shows a compositional bias: basic and acidic residues. Positions 345–361 (SDATANNVDSNQPQQRV) are enriched in polar residues. Positions 362–400 (TSNSSSCSSVSSLVTTATNSSASDTPTTSSSSTSTISAA) are enriched in low complexity. Serine 672 bears the Phosphoserine mark. Positions 923-954 (VSTSGHASLPSRVGSPHHRRNEPQNSSFRSTI) are disordered. Polar residues predominate over residues 945 to 954 (PQNSSFRSTI).

It belongs to the NIBP family. As to quaternary structure, may be part of the multisubunit TRAPP (transport protein particle) complex.

The protein localises to the cytoplasm. It is found in the golgi apparatus. In terms of biological role, cooperates with Rab11 and fwd/PI4K to mediate the flow of membrane through the Golgi, which is required to support cleavage furrow ingression, therefore promoting cytokinesis in male meiotic cells. The protein is Protein brunelleschi of Drosophila melanogaster (Fruit fly).